We begin with the raw amino-acid sequence, 599 residues long: Elongation factor 4 (599 aa).

The region spanning 5-187 is the tr-type G domain; sequence AHIRNFSIVA…AIVKHLPAPK (183 aa). GTP-binding positions include 17-22 and 134-137; these read DHGKST and NKID.

Belongs to the TRAFAC class translation factor GTPase superfamily. Classic translation factor GTPase family. LepA subfamily.

It localises to the cell inner membrane. It carries out the reaction GTP + H2O = GDP + phosphate + H(+). In terms of biological role, required for accurate and efficient protein synthesis under certain stress conditions. May act as a fidelity factor of the translation reaction, by catalyzing a one-codon backward translocation of tRNAs on improperly translocated ribosomes. Back-translocation proceeds from a post-translocation (POST) complex to a pre-translocation (PRE) complex, thus giving elongation factor G a second chance to translocate the tRNAs correctly. Binds to ribosomes in a GTP-dependent manner. This chain is Elongation factor 4, found in Ruegeria pomeroyi (strain ATCC 700808 / DSM 15171 / DSS-3) (Silicibacter pomeroyi).